We begin with the raw amino-acid sequence, 93 residues long: Small ribosomal subunit protein uS19 (93 aa).

This sequence belongs to the universal ribosomal protein uS19 family.

Its function is as follows. Protein S19 forms a complex with S13 that binds strongly to the 16S ribosomal RNA. This is Small ribosomal subunit protein uS19 from Maridesulfovibrio salexigens (strain ATCC 14822 / DSM 2638 / NCIMB 8403 / VKM B-1763) (Desulfovibrio salexigens).